The chain runs to 660 residues: Bifunctional polymyxin resistance protein ArnA (660 aa).

Positions 1–304 are formyltransferase ArnAFT; the sequence is MKTVVFAYHD…TLGLVQGSRL (304 aa). 86 to 88 contacts (6R)-10-formyltetrahydrofolate; the sequence is HLI. Catalysis depends on His104, which acts as the Proton donor; for formyltransferase activity. Residues Arg114 and 136-140 contribute to the (6R)-10-formyltetrahydrofolate site; that span reads VKRAD. The interval 314–660 is dehydrogenase ArnADH; that stretch reads RRTRVLILGV…RTVDLTDKPS (347 aa). NAD(+)-binding positions include Asp347 and 368–369; that span reads DI. Residues Ala393, Tyr398, and 432-433 contribute to the UDP-alpha-D-glucuronate site; that span reads TS. Glu434 serves as the catalytic Proton acceptor; for decarboxylase activity. UDP-alpha-D-glucuronate-binding positions include Arg460, Asn492, 526–535, and Tyr613; that span reads KLIDGGKQKR. Catalysis depends on Arg619, which acts as the Proton donor; for decarboxylase activity.

In the N-terminal section; belongs to the Fmt family. UDP-L-Ara4N formyltransferase subfamily. It in the C-terminal section; belongs to the NAD(P)-dependent epimerase/dehydratase family. UDP-glucuronic acid decarboxylase subfamily. As to quaternary structure, homohexamer, formed by a dimer of trimers.

It catalyses the reaction UDP-alpha-D-glucuronate + NAD(+) = UDP-beta-L-threo-pentopyranos-4-ulose + CO2 + NADH. The enzyme catalyses UDP-4-amino-4-deoxy-beta-L-arabinose + (6R)-10-formyltetrahydrofolate = UDP-4-deoxy-4-formamido-beta-L-arabinose + (6S)-5,6,7,8-tetrahydrofolate + H(+). Its pathway is nucleotide-sugar biosynthesis; UDP-4-deoxy-4-formamido-beta-L-arabinose biosynthesis; UDP-4-deoxy-4-formamido-beta-L-arabinose from UDP-alpha-D-glucuronate: step 1/3. It participates in nucleotide-sugar biosynthesis; UDP-4-deoxy-4-formamido-beta-L-arabinose biosynthesis; UDP-4-deoxy-4-formamido-beta-L-arabinose from UDP-alpha-D-glucuronate: step 3/3. It functions in the pathway bacterial outer membrane biogenesis; lipopolysaccharide biosynthesis. Bifunctional enzyme that catalyzes the oxidative decarboxylation of UDP-glucuronic acid (UDP-GlcUA) to UDP-4-keto-arabinose (UDP-Ara4O) and the addition of a formyl group to UDP-4-amino-4-deoxy-L-arabinose (UDP-L-Ara4N) to form UDP-L-4-formamido-arabinose (UDP-L-Ara4FN). The modified arabinose is attached to lipid A and is required for resistance to polymyxin and cationic antimicrobial peptides. The polypeptide is Bifunctional polymyxin resistance protein ArnA (Escherichia coli (strain K12 / MC4100 / BW2952)).